A 375-amino-acid polypeptide reads, in one-letter code: Chaperone protein DnaJ (375 aa).

One can recognise a J domain in the interval 5–70; that stretch reads DYYSLLEVER…QKRAAYDRYG (66 aa). The CR-type zinc finger occupies 135–213; that stretch reads GKTVDIEIDV…CHGEGRCEKH (79 aa). Zn(2+) contacts are provided by Cys148, Cys151, Cys165, Cys168, Cys187, Cys190, Cys201, and Cys204. CXXCXGXG motif repeat units lie at residues 148–155, 165–172, 187–194, and 201–208; these read CDACHGSG, CDTCHGSG, CPVCQGKG, and CPECHGEG.

It belongs to the DnaJ family. As to quaternary structure, homodimer. Zn(2+) is required as a cofactor.

The protein resides in the cytoplasm. Functionally, participates actively in the response to hyperosmotic and heat shock by preventing the aggregation of stress-denatured proteins and by disaggregating proteins, also in an autonomous, DnaK-independent fashion. Unfolded proteins bind initially to DnaJ; upon interaction with the DnaJ-bound protein, DnaK hydrolyzes its bound ATP, resulting in the formation of a stable complex. GrpE releases ADP from DnaK; ATP binding to DnaK triggers the release of the substrate protein, thus completing the reaction cycle. Several rounds of ATP-dependent interactions between DnaJ, DnaK and GrpE are required for fully efficient folding. Also involved, together with DnaK and GrpE, in the DNA replication of plasmids through activation of initiation proteins. This Zymomonas mobilis subsp. mobilis (strain ATCC 31821 / ZM4 / CP4) protein is Chaperone protein DnaJ.